A 133-amino-acid polypeptide reads, in one-letter code: U6 snRNA-associated Sm-like protein LSm1 (133 aa).

In terms of domain architecture, Sm spans 5–80 (PGTASLIEDI…VVLLGEIDLE (76 aa)). Serine 123 carries the phosphoserine modification. Threonine 129 is modified (phosphothreonine).

Belongs to the snRNP Sm proteins family. In terms of assembly, interacts with SLBP; interaction with SLBP occurs when histone mRNA is being rapidly degraded during the S phase. LSm subunits form a heteromer with a donut shape.

It is found in the cytoplasm. The protein resides in the P-body. Functionally, plays a role in the degradation of histone mRNAs, the only eukaryotic mRNAs that are not polyadenylated. Probably also part of an LSm subunits-containing complex involved in the general process of mRNA degradation. The chain is U6 snRNA-associated Sm-like protein LSm1 (LSM1) from Homo sapiens (Human).